We begin with the raw amino-acid sequence, 191 residues long: C-type lectin domain family 2 member D (191 aa).

Residues 1-38 (MHDSNNVEKDITPSELPANPGCLHSKEHSIKATLIWRL) are Cytoplasmic-facing. The chain crosses the membrane as a helical; Signal-anchor for type II membrane protein span at residues 39–59 (FFLIMFLTIIVCGMVAALSAI). Topologically, residues 60-191 (RANCHQEPSV…WICSKSDIHV (132 aa)) are extracellular. A disulfide bridge connects residues Cys-75 and Cys-86. Residues 82 to 185 (FQRKCFYFSD…HYTERKWICS (104 aa)) form the C-type lectin domain. Residues Asn-95 and Asn-147 are each glycosylated (N-linked (GlcNAc...) asparagine). Cys-103 and Cys-184 form a disulfide bridge.

Homodimer; disulfide-linked. N-glycosylated. As to expression, detected in peripheral blood leukocytes, osteoblasts, lymph node, thymus and spleen. Isoform 1, isoform 2 and isoform 4 are expressed in T- and B-lymphocytes, and at lower levels in NK cells. They are also expressed in B-cell lines and LPS-matured monocyte-derived dendritic cells.

It is found in the cell membrane. The protein localises to the endoplasmic reticulum. Receptor for KLRB1 that protects target cells against natural killer cell-mediated lysis. Inhibits osteoclast formation. Inhibits bone resorption. Modulates the release of interferon-gamma. Binds high molecular weight sulfated glycosaminoglycans. The chain is C-type lectin domain family 2 member D (CLEC2D) from Homo sapiens (Human).